We begin with the raw amino-acid sequence, 393 residues long: NAD(P)H-quinone oxidoreductase subunit H, chloroplastic (393 aa).

The protein belongs to the complex I 49 kDa subunit family. As to quaternary structure, NDH is composed of at least 16 different subunits, 5 of which are encoded in the nucleus. Interacts with the chaperonin CNP60B4 subunit.

It localises to the plastid. Its subcellular location is the chloroplast thylakoid membrane. The catalysed reaction is a plastoquinone + NADH + (n+1) H(+)(in) = a plastoquinol + NAD(+) + n H(+)(out). The enzyme catalyses a plastoquinone + NADPH + (n+1) H(+)(in) = a plastoquinol + NADP(+) + n H(+)(out). Its function is as follows. NDH shuttles electrons from NAD(P)H:plastoquinone, via FMN and iron-sulfur (Fe-S) centers, to quinones in the photosynthetic chain and possibly in a chloroplast respiratory chain. The immediate electron acceptor for the enzyme in this species is believed to be plastoquinone. Couples the redox reaction to proton translocation, and thus conserves the redox energy in a proton gradient. This Arabidopsis thaliana (Mouse-ear cress) protein is NAD(P)H-quinone oxidoreductase subunit H, chloroplastic.